A 285-amino-acid polypeptide reads, in one-letter code: Nucleotide-binding protein Cphy_0331 (285 aa).

Residue 8–15 (GMSGAGKS) coordinates ATP. 59–62 (DIRS) serves as a coordination point for GTP.

This sequence belongs to the RapZ-like family.

Functionally, displays ATPase and GTPase activities. This chain is Nucleotide-binding protein Cphy_0331, found in Lachnoclostridium phytofermentans (strain ATCC 700394 / DSM 18823 / ISDg) (Clostridium phytofermentans).